A 72-amino-acid chain; its full sequence is Large ribosomal subunit protein uL29 (72 aa).

The protein belongs to the universal ribosomal protein uL29 family.

This is Large ribosomal subunit protein uL29 from Thermodesulfovibrio yellowstonii (strain ATCC 51303 / DSM 11347 / YP87).